We begin with the raw amino-acid sequence, 1366 residues long: DNA-directed RNA polymerase subunit beta' (1366 aa).

The segment covering 1–23 (MTSSKPKKSSRVRKTSKNSKKNN) has biased composition (basic residues). The disordered stretch occupies residues 1-25 (MTSSKPKKSSRVRKTSKNSKKNNKI). Residues cysteine 248, cysteine 315, cysteine 322, and cysteine 325 each contribute to the Zn(2+) site. A disordered region spans residues 1290 to 1366 (DYTVDMPQSP…LQEEGLLSDE (77 aa)). The span at 1295–1305 (MPQSPTVSSTA) shows a compositional bias: polar residues. The segment covering 1354 to 1366 (LEGLQEEGLLSDE) has biased composition (low complexity).

This sequence belongs to the RNA polymerase beta' chain family. RpoC2 subfamily. In terms of assembly, in cyanobacteria the RNAP catalytic core is composed of 2 alpha, 1 beta, 1 beta', 1 gamma and 1 omega subunit. When a sigma factor is associated with the core the holoenzyme is formed, which can initiate transcription. It depends on Zn(2+) as a cofactor.

It catalyses the reaction RNA(n) + a ribonucleoside 5'-triphosphate = RNA(n+1) + diphosphate. Its function is as follows. DNA-dependent RNA polymerase catalyzes the transcription of DNA into RNA using the four ribonucleoside triphosphates as substrates. This is DNA-directed RNA polymerase subunit beta' from Prochlorococcus marinus (strain MIT 9515).